We begin with the raw amino-acid sequence, 456 residues long: UDP-N-acetylmuramoylalanine--D-glutamate ligase (456 aa).

Residue G113–T119 participates in ATP binding.

Belongs to the MurCDEF family.

The protein resides in the cytoplasm. It carries out the reaction UDP-N-acetyl-alpha-D-muramoyl-L-alanine + D-glutamate + ATP = UDP-N-acetyl-alpha-D-muramoyl-L-alanyl-D-glutamate + ADP + phosphate + H(+). The protein operates within cell wall biogenesis; peptidoglycan biosynthesis. Cell wall formation. Catalyzes the addition of glutamate to the nucleotide precursor UDP-N-acetylmuramoyl-L-alanine (UMA). The sequence is that of UDP-N-acetylmuramoylalanine--D-glutamate ligase from Rippkaea orientalis (strain PCC 8801 / RF-1) (Cyanothece sp. (strain PCC 8801)).